Reading from the N-terminus, the 149-residue chain is Myoglobin (149 aa).

N-acetylvaline is present on Val-2. Residues 2-143 enclose the Globin domain; the sequence is VDWEKVNSVW…ICSDIEKEYK (142 aa). Residue His-89 participates in heme b binding.

Belongs to the globin family. Monomeric.

The protein resides in the cytoplasm. The protein localises to the sarcoplasm. The enzyme catalyses Fe(III)-heme b-[protein] + nitric oxide + H2O = Fe(II)-heme b-[protein] + nitrite + 2 H(+). It carries out the reaction H2O2 + AH2 = A + 2 H2O. Functionally, monomeric heme protein which primary function is to store oxygen and facilitate its diffusion within muscle tissues. Reversibly binds oxygen through a pentacoordinated heme iron and enables its timely and efficient release as needed during periods of heightened demand. Depending on the oxidative conditions of tissues and cells, and in addition to its ability to bind oxygen, it also has a nitrite reductase activity whereby it regulates the production of bioactive nitric oxide. Under stress conditions, like hypoxia and anoxia, it also protects cells against reactive oxygen species thanks to its pseudoperoxidase activity. This chain is Myoglobin (mb), found in Mustelus antarcticus (Gummy shark).